Reading from the N-terminus, the 268-residue chain is Malonyl-[acyl-carrier protein] O-methyltransferase 1 (268 aa).

It belongs to the methyltransferase superfamily.

It carries out the reaction malonyl-[ACP] + S-adenosyl-L-methionine = malonyl-[ACP] methyl ester + S-adenosyl-L-homocysteine. Its pathway is cofactor biosynthesis; biotin biosynthesis. Its function is as follows. Converts the free carboxyl group of a malonyl-thioester to its methyl ester by transfer of a methyl group from S-adenosyl-L-methionine (SAM). It allows to synthesize pimeloyl-ACP via the fatty acid synthetic pathway. The chain is Malonyl-[acyl-carrier protein] O-methyltransferase 1 from Ilyobacter polytropus (strain ATCC 51220 / DSM 2926 / LMG 16218 / CuHBu1).